A 571-amino-acid polypeptide reads, in one-letter code: Urease subunit alpha (571 aa).

In terms of domain architecture, Urease spans 133 to 571; it reads AGIDTHIHFI…VALNQRYFFS (439 aa). Residues histidine 138, histidine 140, and lysine 221 each contribute to the Ni(2+) site. Lysine 221 carries the N6-carboxylysine modification. A substrate-binding site is contributed by histidine 223. Positions 250 and 276 each coordinate Ni(2+). Histidine 324 acts as the Proton donor in catalysis. Aspartate 364 serves as a coordination point for Ni(2+).

It belongs to the metallo-dependent hydrolases superfamily. Urease alpha subunit family. As to quaternary structure, heterotrimer of UreA (gamma), UreB (beta) and UreC (alpha) subunits. Three heterotrimers associate to form the active enzyme. It depends on Ni cation as a cofactor. In terms of processing, carboxylation allows a single lysine to coordinate two nickel ions.

It localises to the cytoplasm. The catalysed reaction is urea + 2 H2O + H(+) = hydrogencarbonate + 2 NH4(+). It functions in the pathway nitrogen metabolism; urea degradation; CO(2) and NH(3) from urea (urease route): step 1/1. This is Urease subunit alpha from Photorhabdus laumondii subsp. laumondii (strain DSM 15139 / CIP 105565 / TT01) (Photorhabdus luminescens subsp. laumondii).